Reading from the N-terminus, the 94-residue chain is Integration host factor subunit beta (94 aa).

It belongs to the bacterial histone-like protein family. Heterodimer of an alpha and a beta chain.

This protein is one of the two subunits of integration host factor, a specific DNA-binding protein that functions in genetic recombination as well as in transcriptional and translational control. The protein is Integration host factor subunit beta of Haemophilus influenzae (strain PittGG).